Reading from the N-terminus, the 389-residue chain is MTDLPLLDTDGDPASTRVVVAMSGGVDSSVVAGLYARAGYDVVGVTLQLYDHGEAAHRRGACCAGQDIYDASEVARTLGIPHYVLDYESRFKEEVIDRFAASYASGVTPIPCVDCNRTVKFRDLLATAEELGARYLATGHYVASRALPDGRRGLYRAAEEARDQSYFLYATTAAQLERLRFPLGEMRKADVRALAAEFGLPVADKPDSQDICFVPGGDYAQVVQRLRPEAAEPGDIVHLDGRVLGRHRGVMHYTIGQRKGLGIATPEPLYVIAIDAARQQVRVGPRAALSVSAITIDDVNWLGDIPFTDALARQADVYVKVRSTRPPVPAHLARATDGTPAVHLAVGEEGVAPGQACVLYDDAGAAARLLGGGTIMRAERVAKSVAEVA.

ATP-binding positions include 21–28 (AMSGGVDS) and Leu-47. Catalysis depends on Cys-115, which acts as the Nucleophile. A disulfide bridge connects residues Cys-115 and Cys-212. An ATP-binding site is contributed by Gly-139. The tract at residues 162 to 164 (RDQ) is interaction with tRNA. The active-site Cysteine persulfide intermediate is Cys-212.

It belongs to the MnmA/TRMU family.

It localises to the cytoplasm. It catalyses the reaction S-sulfanyl-L-cysteinyl-[protein] + uridine(34) in tRNA + AH2 + ATP = 2-thiouridine(34) in tRNA + L-cysteinyl-[protein] + A + AMP + diphosphate + H(+). Functionally, catalyzes the 2-thiolation of uridine at the wobble position (U34) of tRNA, leading to the formation of s(2)U34. This is tRNA-specific 2-thiouridylase MnmA from Xanthobacter autotrophicus (strain ATCC BAA-1158 / Py2).